The chain runs to 298 residues: uncharacterized protein (298 aa).

The next 10 membrane-spanning stretches (helical) occupy residues 5–25, 36–56, 76–96, 97–117, 124–144, 147–167, 181–201, 216–236, 244–264, and 272–292; these read ILFG…MSAF, MENV…IYPF, VVVG…ISLA, TATA…PLLL, SALI…DPSV, VGLV…LAYI, VILA…FIDI, ILWI…LTYA, IIAP…LYLG, and SSLG…PALL. The EamA 1 domain maps to 17–141; sequence LCFGIMSAFV…GLVGVVLISD (125 aa). In terms of domain architecture, EamA 2 spans 183-288; the sequence is LAFAFGMSLL…ILCSGLLIAL (106 aa).

This sequence belongs to the EamA transporter family.

Its subcellular location is the cell membrane. This is an uncharacterized protein from Helicobacter pylori (strain J99 / ATCC 700824) (Campylobacter pylori J99).